The following is a 552-amino-acid chain: ATP synthase subunit alpha, mitochondrial (552 aa).

The N-terminal 47 residues, 1-47 (MSIFSARLASSVARNLPKAANQVACKAAYPAASLAARKLHVASTQRS), are a transit peptide targeting the mitochondrion. 211–218 (GDRQTGKT) contributes to the ATP binding site.

Belongs to the ATPase alpha/beta chains family. In terms of assembly, F-type ATPases have 2 components, CF(1) - the catalytic core - and CF(0) - the membrane proton channel. CF(1) has five subunits: alpha(3), beta(3), gamma(1), delta(1), epsilon(1). CF(0) has three main subunits: a, b and c.

The protein resides in the mitochondrion inner membrane. Mitochondrial membrane ATP synthase (F(1)F(0) ATP synthase or Complex V) produces ATP from ADP in the presence of a proton gradient across the membrane which is generated by electron transport complexes of the respiratory chain. F-type ATPases consist of two structural domains, F(1) - containing the extramembraneous catalytic core, and F(0) - containing the membrane proton channel, linked together by a central stalk and a peripheral stalk. During catalysis, ATP synthesis in the catalytic domain of F(1) is coupled via a rotary mechanism of the central stalk subunits to proton translocation. Subunits alpha and beta form the catalytic core in F(1). Rotation of the central stalk against the surrounding alpha(3)beta(3) subunits leads to hydrolysis of ATP in three separate catalytic sites on the beta subunits. Subunit alpha does not bear the catalytic high-affinity ATP-binding sites. In Drosophila melanogaster (Fruit fly), this protein is ATP synthase subunit alpha, mitochondrial (blw).